The chain runs to 477 residues: Spliceosome-associated protein CWC27 homolog (477 aa).

Residues 11-166 form the PPIase cyclophilin-type domain; it reads SNGKVLLKTT…NPHKIKCTEV (156 aa). 2 disordered regions span residues 203-355 and 401-477; these read LLSF…AENT and TQAI…KERR. Positions 208–218 are enriched in acidic residues; sequence EEAEEDEEEVN. Basic and acidic residues-rich tracts occupy residues 230–240 and 247–258; these read SSHDLLKDDPR and VEREKDSQSADS. A compositionally biased stretch (acidic residues) spans 259–279; sequence DKDEDEMSDDDDEEEDDEMDS. 3 stretches are compositionally biased toward basic and acidic residues: residues 280–299, 311–353, and 430–442; these read DEKH…DPSK, EERK…KEAE, and QFEE…KDAN. The stretch at 308–381 forms a coiled coil; that stretch reads DEAEERKSSR…EEVRKKNTNK (74 aa).

This sequence belongs to the cyclophilin-type PPIase family. In terms of assembly, part of the activated spliceosome B/catalytic step 1 spliceosome, one of the forms of the spliceosome which has a well-formed active site but still cannot catalyze the branching reaction and is composed at least of 52 proteins, the U2, U5 and U6 snRNAs and the pre-mRNA. Recruited during early steps of activated spliceosome B maturation, it is probably one of the first proteins released from this complex as he matures to the spliceosome C complex. Component of the minor spliceosome, which splices U12-type introns.

It localises to the nucleus. In terms of biological role, as part of the spliceosome, plays a role in pre-mRNA splicing. Probable inactive PPIase with no peptidyl-prolyl cis-trans isomerase activity. In Xenopus laevis (African clawed frog), this protein is Spliceosome-associated protein CWC27 homolog (cwc27).